The sequence spans 587 residues: L-ascorbate oxidase (587 aa).

The first 33 residues, 1–33 (MAKVADKPFFPKPFLSFLVLSIIFGFGITLSEA), serve as a signal peptide directing secretion. 2 Plastocyanin-like domains span residues 38–157 (IKHY…LIVD) and 169–335 (DEEI…NYLP). Disulfide bonds link Cys-54-Cys-236, Cys-116-Cys-574, and Cys-215-Cys-228. Positions 95, 97, 139, and 141 each coordinate Cu cation. N-linked (GlcNAc...) asparagine glycans are attached at residues Asn-360, Asn-401, and Asn-475. The region spanning 379-559 (NRRLFLLNTQ…HMGMGVVFAE (181 aa)) is the Plastocyanin-like 3 domain. His-480, His-483, His-485, His-542, Cys-543, His-544, His-548, and Met-553 together coordinate Cu cation.

The protein belongs to the multicopper oxidase family. Dimer. The cofactor is Cu cation.

The protein localises to the secreted. The catalysed reaction is 4 L-ascorbate + O2 = 4 monodehydro-L-ascorbate radical + 2 H2O. Functionally, may be involved in a redox system involving ascorbic acid. In Cucumis sativus (Cucumber), this protein is L-ascorbate oxidase.